The following is a 274-amino-acid chain: Hematopoietically-expressed homeobox protein hhex (274 aa).

Positions 139–198 (RKGGQVRFSNDQTIELEKKFETQKYLSPPERKRLAKMLQLSERQVKTWFQNRRAKWRRLK) form a DNA-binding region, homeobox. Residues 197–274 (LKQENPQGNK…GDKGFYNCAH (78 aa)) are disordered. Residues 237 to 248 (DEPTSSPTSQET) are compositionally biased toward polar residues. The segment covering 249–263 (LDSEVSDDSDQEVDI) has biased composition (acidic residues).

Expressed in the most dorsoanterior endomesoderm of the blastula and gastrula embryo, and later is restricted to the forming liver diverticulum.

Its subcellular location is the nucleus. In terms of biological role, recognizes the DNA sequence 5'-ATTAA-3'. Transcriptional repressor. Regulates the differentiation of both endothelial and blood cells. Probably plays a role in the proliferation of vascular endothelial cells during blood vessel development. Establishes anterior identity at two levels; acts early to enhance canonical wnt-signaling by repressing expression of tle4, and acts later to inhibit nodal-signaling by directly targeting nodal/nr1 and nodal2/nr2. May play a role in liver development. Induces heart development. The protein is Hematopoietically-expressed homeobox protein hhex of Xenopus tropicalis (Western clawed frog).